The following is a 396-amino-acid chain: Activity-regulated cytoskeleton-associated protein (396 aa).

Residues S54–Y78 adopt a coiled-coil conformation. Positions K89–E100 are interaction with SH3GL1 or SH3GL3. The segment at Q195–F214 is interaction with DNM2. S260 is subject to Phosphoserine. Glycyl lysine isopeptide (Lys-Gly) (interchain with G-Cter in ubiquitin) cross-links involve residues K268 and K269. T278 is modified (phosphothreonine). Residues Q356 to E396 form a disordered region. The segment covering P381 to E396 has biased composition (polar residues).

It belongs to the ARC/ARG3.1 family. In terms of assembly, homooligomer; homooligomerizes into virion-like capsids. Interacts with SH3GL1/endophilin-2, SH3GL3/endophilin-3 and DNM2/DYN2. Interacts with CAMK2B (in the kinase inactive state); leading to target ARC to inactive synapses. Interacts with PSEN1. Post-translationally, palmitoylation anchors the protein into the membrane by allowing direct insertion into the hydrophobic core of the lipid bilayer. In terms of processing, ubiquitinated by UBE3A, leading to its degradation by the proteasome, thereby promoting AMPA receptors (AMPARs) expression at synapses. Ubiquitinated by RNF216 at Lys-268 and Lys-269 limiting ARC protein levels induced by synaptic activity and thus regulating ARC-dependent forms of synaptic plasticity. Phosphorylation at Ser-260 by CaMK2 prevents homooligomerization into virion-like capsids by disrupting an interaction surface essential for high-order oligomerization. Phosphorylation by CaMK2 inhibits synaptic activity.

It localises to the extracellular vesicle membrane. The protein localises to the postsynaptic cell membrane. The protein resides in the synapse. Its subcellular location is the postsynaptic density. It is found in the early endosome membrane. It localises to the cell projection. The protein localises to the dendrite. The protein resides in the cytoplasm. Its subcellular location is the cytoskeleton. It is found in the cell cortex. It localises to the dendritic spine. The protein localises to the cytoplasmic vesicle. The protein resides in the secretory vesicle. Its subcellular location is the acrosome. It is found in the clathrin-coated vesicle membrane. Master regulator of synaptic plasticity that self-assembles into virion-like capsids that encapsulate RNAs and mediate intercellular RNA transfer in the nervous system. ARC protein is released from neurons in extracellular vesicles that mediate the transfer of ARC mRNA into new target cells, where ARC mRNA can undergo activity-dependent translation. ARC capsids are endocytosed and are able to transfer ARC mRNA into the cytoplasm of neurons. Acts as a key regulator of synaptic plasticity: required for protein synthesis-dependent forms of long-term potentiation (LTP) and depression (LTD) and for the formation of long-term memory. Regulates synaptic plasticity by promoting endocytosis of AMPA receptors (AMPARs) in response to synaptic activity: this endocytic pathway maintains levels of surface AMPARs in response to chronic changes in neuronal activity through synaptic scaling, thereby contributing to neuronal homeostasis. Acts as a postsynaptic mediator of activity-dependent synapse elimination in the developing cerebellum by mediating elimination of surplus climbing fiber synapses. Accumulates at weaker synapses, probably to prevent their undesired enhancement. This suggests that ARC-containing virion-like capsids may be required to eliminate synaptic material. Required to transduce experience into long-lasting changes in visual cortex plasticity and for long-term memory. Involved in postsynaptic trafficking and processing of amyloid-beta A4 (APP) via interaction with PSEN1. In addition to its role in synapses, also involved in the regulation of the immune system: specifically expressed in skin-migratory dendritic cells and regulates fast dendritic cell migration, thereby regulating T-cell activation. The sequence is that of Activity-regulated cytoskeleton-associated protein from Homo sapiens (Human).